We begin with the raw amino-acid sequence, 861 residues long: Bifunctional uridylyltransferase/uridylyl-removing enzyme (861 aa).

Positions 1–321 are uridylyltransferase; sequence MKNDNRIIKN…VYHQKQKIIR (321 aa). The interval 322-678 is uridylyl-removing; that stretch reads LDDEFQLSNR…IMPHHSQGGT (357 aa). Residues 440 to 562 form the HD domain; the sequence is VDQHTLFVIR…LPHARYLDYL (123 aa). ACT domains are found at residues 679–760 and 788–861; these read EVFI…AVSR and QLFL…KSKY.

The protein belongs to the GlnD family. Mg(2+) is required as a cofactor.

It carries out the reaction [protein-PII]-L-tyrosine + UTP = [protein-PII]-uridylyl-L-tyrosine + diphosphate. The catalysed reaction is [protein-PII]-uridylyl-L-tyrosine + H2O = [protein-PII]-L-tyrosine + UMP + H(+). With respect to regulation, uridylyltransferase (UTase) activity is inhibited by glutamine, while glutamine activates uridylyl-removing (UR) activity. Its function is as follows. Modifies, by uridylylation and deuridylylation, the PII regulatory proteins (GlnB and homologs), in response to the nitrogen status of the cell that GlnD senses through the glutamine level. Under low glutamine levels, catalyzes the conversion of the PII proteins and UTP to PII-UMP and PPi, while under higher glutamine levels, GlnD hydrolyzes PII-UMP to PII and UMP (deuridylylation). Thus, controls uridylylation state and activity of the PII proteins, and plays an important role in the regulation of nitrogen assimilation and metabolism. This is Bifunctional uridylyltransferase/uridylyl-removing enzyme from Legionella pneumophila (strain Corby).